Here is a 57-residue protein sequence, read N- to C-terminus: Large ribosomal subunit protein bL32c (57 aa).

It belongs to the bacterial ribosomal protein bL32 family.

Its subcellular location is the plastid. It localises to the chloroplast. In Amborella trichopoda, this protein is Large ribosomal subunit protein bL32c.